The chain runs to 262 residues: Histone chaperone cia1 (262 aa).

Positions isoleucine 157 to glutamine 262 are disordered. 2 coiled-coil regions span residues aspartate 173 to glycine 196 and lysine 223 to lysine 253. 2 stretches are compositionally biased toward acidic residues: residues aspartate 173–glutamate 219 and glutamate 226–serine 242. Basic and acidic residues predominate over residues alanine 250 to glutamine 262.

This sequence belongs to the ASF1 family. In terms of assembly, interacts with histone H3 and histone H4.

It is found in the nucleus. Histone chaperone that facilitates histone deposition and histone exchange and removal during nucleosome assembly and disassembly. The protein is Histone chaperone cia1 (cia1) of Schizosaccharomyces pombe (strain 972 / ATCC 24843) (Fission yeast).